A 701-amino-acid chain; its full sequence is Aryl hydrocarbon receptor repressor (701 aa).

The disordered stretch occupies residues 1–38 (MMIPSGECTYAGRKRRKPIQKRRLTMGTEKSNPSKRHR). Positions 12–24 (GRKRRKPIQKRRL) are enriched in basic residues. Residues 25–78 (TMGTEKSNPSKRHRDRLNTELDHLASLLPFSPDIISKLDKLSVLRLSVSYLRVK) enclose the bHLH domain. The region spanning 106-176 (PVQEGRLLLE…RQLHWAMDPP (71 aa)) is the PAS domain. 2 disordered regions span residues 360-389 (DPKGTSGDREEDDQKHILRRSPGARGQREM) and 409-436 (TEQRSQEGTTKLTRQPSKSEPSTCLVPH). Residues 365 to 375 (SGDREEDDQKH) show a composition bias toward basic and acidic residues. The segment covering 414–430 (QEGTTKLTRQPSKSEPS) has biased composition (polar residues). The tract at residues 555–701 (ASTTSCVWLG…SKGSDGIFLP (147 aa)) is needed for transcriptional repression. Residues lysine 583 and lysine 660 each participate in a glycyl lysine isopeptide (Lys-Gly) (interchain with G-Cter in SUMO2) cross-link.

In terms of assembly, interacts with ARNT, ANKRA2, HDAC4 and HDAC5. Interacts with ARNT; forms a heterodimer with ARNT. As to expression, highly expressed in testis and weakly expressed in heart and liver. Highly expressed in small intestine and cecum in a male-dominant sexual dimorphic fashion.

Its subcellular location is the cytoplasm. It localises to the nucleus. Mediates dioxin toxicity and is involved in regulation of cell growth and differentiation. Represses the transcription activity of AHR by competing with this transcription factor for heterodimer formation with the ARNT and subsequently binding to the xenobiotic response element (XRE) sequence present in the promoter regulatory region of variety of genes. Represses CYP1A1 by binding the XRE sequence and recruiting ANKRA2, HDAC4 and/or HDAC5. Autoregulates its expression by associating with its own XRE site. The protein is Aryl hydrocarbon receptor repressor (Ahrr) of Rattus norvegicus (Rat).